A 1392-amino-acid chain; its full sequence is DNA-directed RNA polymerase subunit beta'' (1392 aa).

Zn(2+)-binding residues include Cys224, Cys295, Cys302, and Cys305.

This sequence belongs to the RNA polymerase beta' chain family. RpoC2 subfamily. As to quaternary structure, in plastids the minimal PEP RNA polymerase catalytic core is composed of four subunits: alpha, beta, beta', and beta''. When a (nuclear-encoded) sigma factor is associated with the core the holoenzyme is formed, which can initiate transcription. It depends on Zn(2+) as a cofactor.

The protein localises to the plastid. Its subcellular location is the chloroplast. The catalysed reaction is RNA(n) + a ribonucleoside 5'-triphosphate = RNA(n+1) + diphosphate. Functionally, DNA-dependent RNA polymerase catalyzes the transcription of DNA into RNA using the four ribonucleoside triphosphates as substrates. This Solanum lycopersicum (Tomato) protein is DNA-directed RNA polymerase subunit beta''.